We begin with the raw amino-acid sequence, 300 residues long: MQRKIPRRIVDGVLLLDKPSGMTSNGALQTARRLLNAAKAGHTGTLDPMASGLLPLTFGEATKFSQILLDADKTYEAGVKLGTTTDTGDADGNVVAEHPVSVTREALEEVLSRFRGEIDQLPPMYSALKRDGKPLYEYARAGIEIEREVRRVTIHDLELIAFSGEHFSMRVRCSKGTYIRTLAMDIGAALGCGAYLDALRRTAIGDFDAARAVTLEALEASPAAMRDGLLEPVDALVAHFPKVELQPAEAAAILQGRELRKPEDGQGSVRLFCGGRFLGVGEWQSGSLRPKRLIATQTGQ.

Catalysis depends on D47, which acts as the Nucleophile.

It belongs to the pseudouridine synthase TruB family. Type 1 subfamily.

The catalysed reaction is uridine(55) in tRNA = pseudouridine(55) in tRNA. Its function is as follows. Responsible for synthesis of pseudouridine from uracil-55 in the psi GC loop of transfer RNAs. The protein is tRNA pseudouridine synthase B of Azoarcus sp. (strain BH72).